The primary structure comprises 310 residues: Methionyl-tRNA formyltransferase (310 aa).

109–112 (SLLP) contacts (6S)-5,6,7,8-tetrahydrofolate.

The protein belongs to the Fmt family.

It catalyses the reaction L-methionyl-tRNA(fMet) + (6R)-10-formyltetrahydrofolate = N-formyl-L-methionyl-tRNA(fMet) + (6S)-5,6,7,8-tetrahydrofolate + H(+). In terms of biological role, attaches a formyl group to the free amino group of methionyl-tRNA(fMet). The formyl group appears to play a dual role in the initiator identity of N-formylmethionyl-tRNA by promoting its recognition by IF2 and preventing the misappropriation of this tRNA by the elongation apparatus. The polypeptide is Methionyl-tRNA formyltransferase (Pseudomonas putida (strain ATCC 700007 / DSM 6899 / JCM 31910 / BCRC 17059 / LMG 24140 / F1)).